A 426-amino-acid polypeptide reads, in one-letter code: MGNCLDSSAKVDNSNHSPHANSASSGSKVSSKTSRSTGPSGLSTTSYSTDSSFGPLPTLRTEGEILSSPNLKAFTFNELKNATKNFRQDNLLGEGGFGCVFKGWIDQTSLTASRPGSGIVVAVKQLKPEGFQGHKEWLTEVNYLGQLSHPNLVLLVGYCAEGENRLLVYEFMPKGSLENHLFRRGAQPLTWAIRMKVAVGAAKGLTFLHEAKSQVIYRDFKAANILLDADFNAKLSDFGLAKAGPTGDNTHVSTKVIGTHGYAAPEYVATGRLTAKSDVYSFGVVLLELISGRRAMDNSNGGNEYSLVDWATPYLGDKRKLFRIMDTKLGGQYPQKGAFTAANLALQCLNPDAKLRPKMSEVLVTLEQLESVAKPGTKHTQMESPRFHHSSVMQKSPVRYSHDRPLLHMTPGASPLPSYTQSPRVR.

The disordered stretch occupies residues 1-54; that stretch reads MGNCLDSSAKVDNSNHSPHANSASSGSKVSSKTSRSTGPSGLSTTSYSTDSSFG. Residue glycine 2 is the site of N-myristoyl glycine attachment. Cysteine 4 is lipidated: S-palmitoyl cysteine. Residues 14-38 show a composition bias toward low complexity; it reads SNHSPHANSASSGSKVSSKTSRSTG. Positions 39–52 are enriched in polar residues; sequence PSGLSTTSYSTDSS. Threonine 75 bears the Phosphothreonine mark. The Protein kinase domain maps to 86 to 369; sequence FRQDNLLGEG…SEVLVTLEQL (284 aa). ATP-binding positions include 92–100 and lysine 124; that span reads LGEGGFGCV. Tyrosine 169 carries the phosphotyrosine modification. The active-site Proton acceptor is the aspartate 219. An O-UMP-serine modification is found at serine 253. Serine 253 carries the phosphoserine modification. 2 positions are modified to phosphothreonine: threonine 254 and threonine 259. Position 254 is an O-UMP-threonine (threonine 254). Phosphotyrosine is present on tyrosine 267. The tract at residues 374–426 is disordered; that stretch reads KPGTKHTQMESPRFHHSSVMQKSPVRYSHDRPLLHMTPGASPLPSYTQSPRVR. Polar residues predominate over residues 417–426; that stretch reads PSYTQSPRVR.

The protein belongs to the protein kinase superfamily. Ser/Thr protein kinase family. Interacts with FLS2. Interacts with the Xanthomonas campestris effector XopAC/AvrAC; the recognition of X.campestris effector XopAC/AvrAC requires the presence of RKS1 and RPP13L4/ZAR1. Component of a stable high-order oligomeric complex made of RKS1 and RPP13L4/ZAR1 which recruits X.campestris effector XopAC/AvrAC-mediated uridylylated PBL2 in the presence of ATP to form a wheel-like pentameric resistosome; this complex triggers immunity toward X.campestris in vascular tissues. Binds to RKS1 when uridylylated. Post-translationally, uridylylated at Ser-253 and Thr-254 by Xanthomonas campestris effector AvrAC/XopAC; this uridylylation is necessary for specific recruitment to RKS1 and to trigger immunity. As to expression, strongly expressed in leaves, moderately in roots, and barely in flowers, mostly in pedicels.

The protein resides in the cell membrane. It is found in the nucleus. It catalyses the reaction L-seryl-[protein] + ATP = O-phospho-L-seryl-[protein] + ADP + H(+). The catalysed reaction is L-threonyl-[protein] + ATP = O-phospho-L-threonyl-[protein] + ADP + H(+). Functionally, involved in disease resistance signaling. Contributes to pathogen-associated molecular pattern (PAMP)-triggered immunity (PTI) signaling and defense responses downstream of FLS2. Acts as a BIK1 decoy and enables Xanthomonas campestris AvrAC/XopAC detection; X.campestris effector AvrAC/XopAC-mediated uridylylation promotes the formation of a complex with RKS1 and RPP13L4/ZAR1 which, in turn, activates effector-triggered immunity (ETI) against X.campestris. Promotes, when uridylylated by AvrAC/XopAC, the release of ADP from the inactive RKS1-ZAR1 complex, thus activating the resistosome. This chain is Probable serine/threonine-protein kinase PBL2, found in Arabidopsis thaliana (Mouse-ear cress).